Reading from the N-terminus, the 1407-residue chain is DNA-directed RNA polymerase subunit beta' (1407 aa).

Cys-70, Cys-72, Cys-85, and Cys-88 together coordinate Zn(2+). Residues Asp-460, Asp-462, and Asp-464 each contribute to the Mg(2+) site. Zn(2+) contacts are provided by Cys-814, Cys-888, Cys-895, and Cys-898. N6-acetyllysine is present on Lys-972.

This sequence belongs to the RNA polymerase beta' chain family. As to quaternary structure, the RNAP catalytic core consists of 2 alpha, 1 beta, 1 beta' and 1 omega subunit. When a sigma factor is associated with the core the holoenzyme is formed, which can initiate transcription. It depends on Mg(2+) as a cofactor. Zn(2+) serves as cofactor.

The catalysed reaction is RNA(n) + a ribonucleoside 5'-triphosphate = RNA(n+1) + diphosphate. DNA-dependent RNA polymerase catalyzes the transcription of DNA into RNA using the four ribonucleoside triphosphates as substrates. The sequence is that of DNA-directed RNA polymerase subunit beta' from Escherichia coli O6:H1 (strain CFT073 / ATCC 700928 / UPEC).